A 71-amino-acid polypeptide reads, in one-letter code: Omega-conotoxin-like CnVIIF (71 aa).

Disulfide bonds link Cys46/Cys61, Cys53/Cys65, and Cys60/Cys70. Cysteine amide; in CnVIID is present on Cys70.

The protein belongs to the conotoxin M superfamily. Expressed by the venom duct.

It is found in the secreted. Its function is as follows. Omega-conotoxins act at presynaptic membranes, they bind and block voltage-gated calcium channels (Cav). The polypeptide is Omega-conotoxin-like CnVIIF (Conus consors (Singed cone)).